The sequence spans 653 residues: Eukaryotic translation initiation factor 4E-binding protein Mextli (653 aa).

One can recognise a KH domain in the interval 227–292 (YCKDEVVIRN…DKINYAKQLM (66 aa)). Disordered stretches follow at residues 311 to 335 (VGGS…TPTG) and 515 to 570 (EGDD…AGTN). 2 stretches are compositionally biased toward low complexity: residues 314-323 (SCSSLNSSNS) and 525-536 (SNGGSSTSNQNG). The segment covering 546 to 563 (SRKESTPETKGAREKGDL) has biased composition (basic and acidic residues).

As to quaternary structure, interacts with eukaryotic translation initiation factor eIF4E1. Also interacts with eukaryotic translation initiation factor 3 complex members eif3-S9/eif3b, Int6/eif3e and eIF-3p40/eif3h and with CG3225.

It is found in the cytoplasm. The protein localises to the cytoplasmic ribonucleoprotein granule. In terms of biological role, plays a role in promoting translation. The chain is Eukaryotic translation initiation factor 4E-binding protein Mextli from Drosophila melanogaster (Fruit fly).